A 379-amino-acid polypeptide reads, in one-letter code: Putative acetyl-CoA C-acetyltransferase VraB (379 aa).

Residue Cys-86 is the Acyl-thioester intermediate of the active site. Catalysis depends on His-338, which acts as the Proton acceptor.

The protein belongs to the thiolase-like superfamily. Thiolase family.

This chain is Putative acetyl-CoA C-acetyltransferase VraB (vraB), found in Staphylococcus aureus (strain COL).